The sequence spans 633 residues: DEAD-box ATP-dependent RNA helicase 27 (633 aa).

A compositionally biased stretch (basic and acidic residues) spans 1–17 (MANLDMEQHSSENEEIK). The segment at 1 to 147 (MANLDMEQHS…DKEEEKKLEE (147 aa)) is disordered. The stretch at 2-34 (ANLDMEQHSSENEEIKKKKHKKRARDEAKKLKQ) forms a coiled coil. Acidic residues-rich tracts occupy residues 37–47 (MEEEPDHEDGD) and 74–83 (DDGEDEAVAE). A compositionally biased stretch (basic residues) spans 88 to 97 (KKKKKNKKLQ). 2 stretches are compositionally biased toward acidic residues: residues 103-114 (NDEEDEVIAEEE) and 131-140 (SEEEEVEDKE). Residues 117–153 (KKKKKKQRKDTEAKSEEEEVEDKEEEKKLEETSIMTN) are a coiled coil. Residues 154–182 (KTFESLSLSDNTYKSIKEMGFARMTQIQA) carry the Q motif motif. A Helicase ATP-binding domain is found at 185 to 360 (IPPLMMGEDV…RVSLTSPVYI (176 aa)). Residue 198–205 (ARTGSGKT) coordinates ATP. Positions 308–311 (DEAD) match the DEAD box motif. One can recognise a Helicase C-terminal domain in the interval 386–534 (RLLFLLTFLK…EHEFEEKKLL (149 aa)). The disordered stretch occupies residues 608–633 (KREPVNKFKRGRGGGRPGGKSKFERY).

It belongs to the DEAD box helicase family. DDX18/HAS1 subfamily.

The enzyme catalyses ATP + H2O = ADP + phosphate + H(+). The protein is DEAD-box ATP-dependent RNA helicase 27 (RH27) of Arabidopsis thaliana (Mouse-ear cress).